We begin with the raw amino-acid sequence, 411 residues long: Acetyl-coenzyme A carboxylase carboxyl transferase subunit beta, chloroplastic (411 aa).

Residues 32-302 enclose the CoA carboxyltransferase N-terminal domain; it reads LWTRCDHCGV…KEQGRIPYGE (271 aa). 4 residues coordinate Zn(2+): cysteine 36, cysteine 39, cysteine 55, and cysteine 58. The segment at 36 to 58 adopts a C4-type zinc-finger fold; the sequence is CDHCGVILYIKHLKENQRVCFGC.

Belongs to the AccD/PCCB family. As to quaternary structure, acetyl-CoA carboxylase is a heterohexamer composed of biotin carboxyl carrier protein, biotin carboxylase and 2 subunits each of ACCase subunit alpha and ACCase plastid-coded subunit beta (accD). The cofactor is Zn(2+).

The protein resides in the plastid. Its subcellular location is the chloroplast stroma. The catalysed reaction is N(6)-carboxybiotinyl-L-lysyl-[protein] + acetyl-CoA = N(6)-biotinyl-L-lysyl-[protein] + malonyl-CoA. The protein operates within lipid metabolism; malonyl-CoA biosynthesis; malonyl-CoA from acetyl-CoA: step 1/1. Component of the acetyl coenzyme A carboxylase (ACC) complex. Biotin carboxylase (BC) catalyzes the carboxylation of biotin on its carrier protein (BCCP) and then the CO(2) group is transferred by the transcarboxylase to acetyl-CoA to form malonyl-CoA. This is Acetyl-coenzyme A carboxylase carboxyl transferase subunit beta, chloroplastic from Chlorella vulgaris (Green alga).